We begin with the raw amino-acid sequence, 426 residues long: Ubiquitin carboxyl-terminal hydrolase 46 (426 aa).

The N-myristoyl glycine moiety is linked to residue glycine 2. Residues 27-406 (YGLVNFGNTC…SAYILFYQAR (380 aa)) form the USP domain. Cysteine 36 (nucleophile) is an active-site residue. The tract at residues 162–181 (TAGLPRSDEKGTSERNGGIT) is disordered. The active-site Proton acceptor is histidine 342.

Belongs to the peptidase C19 family. Interacts with wdr-20 and wdr-48; the catalytic activity of usp-46 is increased in the presence of both wdr-20 and wdr-48. Interacts with glr-1; the interaction results in deubiquitination of glr-1. As to expression, expressed in a number of tissues including the nervous system, pharynx, body wall muscle, vulva muscle and intestine and is detected in many head and ventral cord neurons.

The protein localises to the perikaryon. Its subcellular location is the cytoplasm. The catalysed reaction is Thiol-dependent hydrolysis of ester, thioester, amide, peptide and isopeptide bonds formed by the C-terminal Gly of ubiquitin (a 76-residue protein attached to proteins as an intracellular targeting signal).. Regulates the abundance of the glr-1 glutamate receptor in the ventral nerve cord by promoting its deubiquitination and preventing its degradation in the lysosome. Contributes to the regulation of embryonic polarity. The protein is Ubiquitin carboxyl-terminal hydrolase 46 (usp-46) of Caenorhabditis elegans.